We begin with the raw amino-acid sequence, 382 residues long: Inactive serine protease 54 (382 aa).

A signal peptide spans 1–20 (MAELRGILLLLLYMSHSSSA). One can recognise a Peptidase S1 domain in the interval 29 to 258 (IVDQLHENLV…YSNWIIAKTR (230 aa)). Residue Asn-113 is glycosylated (N-linked (GlcNAc...) asparagine). Disulfide bonds link Cys-154–Cys-216, Cys-185–Cys-195, and Cys-206–Cys-237.

Belongs to the peptidase S1 family. Plasma kallikrein subfamily.

Its subcellular location is the secreted. This is Inactive serine protease 54 (Prss54) from Rattus norvegicus (Rat).